Consider the following 518-residue polypeptide: Putative ribose/galactose/methyl galactoside import ATP-binding protein (518 aa).

The tract at residues 1–22 is disordered; it reads MSIAVLDRPMSRQDTPSASSVP. Residues 12 to 22 are compositionally biased toward polar residues; it reads RQDTPSASSVP. ABC transporter domains follow at residues 29 to 265 and 275 to 515; these read LEVR…VGRE and VPIG…VMEL. An ATP-binding site is contributed by 61-68; the sequence is GENGAGKS.

This sequence belongs to the ABC transporter superfamily. Carbohydrate importer 2 (CUT2) (TC 3.A.1.2) family.

It localises to the cell inner membrane. The catalysed reaction is D-ribose(out) + ATP + H2O = D-ribose(in) + ADP + phosphate + H(+). The enzyme catalyses D-galactose(out) + ATP + H2O = D-galactose(in) + ADP + phosphate + H(+). Functionally, part of an ABC transporter complex involved in carbohydrate import. Could be involved in ribose, galactose and/or methyl galactoside import. Responsible for energy coupling to the transport system. The sequence is that of Putative ribose/galactose/methyl galactoside import ATP-binding protein from Ralstonia nicotianae (strain ATCC BAA-1114 / GMI1000) (Ralstonia solanacearum).